A 464-amino-acid polypeptide reads, in one-letter code: Desmin (464 aa).

S2 is modified (blocked amino end (Ser)). The segment at 2-100 (SQSYSSSQRV…QEFLQTRTNE (99 aa)) is head. Residues S7 and S23 each carry the phosphoserine; by CDK1 modification. Phosphothreonine; by CDK1 is present on T65. In terms of domain architecture, IF rod spans 100–408 (EKVELQELND…KLLEGEENRI (309 aa)). The segment at 101–133 (KVELQELNDRFANYIEKVRFLEQQNALMVAEVN) is coil 1A. Positions 134–143 (RLRGKEPTRV) are linker 1. The tract at residues 144 to 244 (AEMYEEELRE…HEEEIRELQA (101 aa)) is coil 1B. The linker 12 stretch occupies residues 245–260 (QLQEQHIQVEMDISKP). The tract at residues 261-279 (DLTAALRDIRAQYESIAAK) is coil 2A. Residues 280-287 (NIAEAEEW) are linker 2. A coil 2B region spans residues 288 to 404 (YKSKVSDLTQ…ATYRKLLEGE (117 aa)). The tail stretch occupies residues 405-464 (ENRISIPMHQTFASALNFRETSPDQRGSEVHTKKTVMIKTIETRDGEVVSEATQQQHEVL).

Belongs to the intermediate filament family. Homomer.

It is found in the cytoplasm. The protein resides in the myofibril. It localises to the sarcomere. The protein localises to the z line. Its subcellular location is the cell membrane. It is found in the sarcolemma. Functionally, muscle-specific type III intermediate filament essential for proper muscular structure and function. Plays a crucial role in maintaining the structure of sarcomeres, inter-connecting the Z-disks and forming the myofibrils, linking them not only to the sarcolemmal cytoskeleton, but also to the nucleus and mitochondria, thus providing strength for the muscle fiber during activity. In adult striated muscle they form a fibrous network connecting myofibrils to each other and to the plasma membrane from the periphery of the Z-line structures. In Gallus gallus (Chicken), this protein is Desmin (DES).